We begin with the raw amino-acid sequence, 314 residues long: Quinolinate synthase (314 aa).

2 residues coordinate iminosuccinate: His27 and Ser44. Cys89 lines the [4Fe-4S] cluster pocket. Iminosuccinate-binding positions include 115-117 (YIN) and Ser132. Position 175 (Cys175) interacts with [4Fe-4S] cluster. Iminosuccinate-binding positions include 201 to 203 (HPE) and Thr218. Cys271 is a binding site for [4Fe-4S] cluster.

It belongs to the quinolinate synthase family. Type 2 subfamily. It depends on [4Fe-4S] cluster as a cofactor.

It localises to the cytoplasm. The catalysed reaction is iminosuccinate + dihydroxyacetone phosphate = quinolinate + phosphate + 2 H2O + H(+). It participates in cofactor biosynthesis; NAD(+) biosynthesis; quinolinate from iminoaspartate: step 1/1. In terms of biological role, catalyzes the condensation of iminoaspartate with dihydroxyacetone phosphate to form quinolinate. The polypeptide is Quinolinate synthase (Ehrlichia chaffeensis (strain ATCC CRL-10679 / Arkansas)).